A 450-amino-acid polypeptide reads, in one-letter code: Transcription factor SCREAM2 (450 aa).

3 disordered regions span residues 1–47 (MNSD…NQND), 207–231 (RQSS…YERE), and 244–265 (GLNY…KGMP). Positions 209–220 (SSSSKMCNSESS) are enriched in low complexity. The span at 221 to 230 (SEMRKSSYER) shows a compositional bias: basic and acidic residues. Positions 263-312 (GMPAKNLMAERRRRKKLNDRLYMLRSVVPKISKMDRASILGDAIDYLKEL) constitute a bHLH domain. Residues 378-450 (NIHMFCGRRP…LDTAGYAGLV (73 aa)) enclose the ACT domain.

As to quaternary structure, homodimer. Heterodimers with SPCH, MUTE, and FAMA. Expressed constitutively in roots, leaves, stems, and flowers. Broad expression within stomatal cell lineages of leaf epidermis, except in mature guard-cells.

The protein localises to the nucleus. In terms of biological role, mediates stomatal differentiation in the epidermis probably by controlling successive roles of SPCH, MUTE, and FAMA. Functions as a dimer with SPCH during stomatal initiation. This Arabidopsis thaliana (Mouse-ear cress) protein is Transcription factor SCREAM2 (SCRM2).